A 593-amino-acid polypeptide reads, in one-letter code: Arginine--tRNA ligase (593 aa).

Residues 138-148 carry the 'HIGH' region motif; it reads ANPTGPLHVGH.

The protein belongs to the class-I aminoacyl-tRNA synthetase family. Monomer.

The protein resides in the cytoplasm. It carries out the reaction tRNA(Arg) + L-arginine + ATP = L-arginyl-tRNA(Arg) + AMP + diphosphate. The sequence is that of Arginine--tRNA ligase from Burkholderia vietnamiensis (strain G4 / LMG 22486) (Burkholderia cepacia (strain R1808)).